Reading from the N-terminus, the 392-residue chain is Immunoglobulin-binding protein EibA (392 aa).

An N-terminal signal peptide occupies residues 1–27 (MSKKFTKAVLSAAMAGVLFGVSFDIMA). Residues 28-301 (AEQSYSALNA…IAANTRTLQQ (274 aa)) form a surface exposed passenger domain region. Residues 28–341 (AEQSYSALNA…GLFQPYSVGK (314 aa)) lie on the Extracellular side of the membrane. A coiled-coil region spans residues 174–215 (ESANSTIVANELEAQKGKLDAQKGELEAQKKNLGELTTRTDK). Residues 187 to 230 (AQKGKLDAQKGELEAQKKNLGELTTRTDKIDAAAAATAAKVESR) form a right-handed coiled-coil (RHcc) region. Positions 231 to 256 (TLVGVSSDGTLTRAEGAKNTISVNDG) are saddle domain. Residues 257-322 (LVALSGRTDR…INENHKEMKR (66 aa)) are left-handed coiled-coil (LHcc). The tract at residues 299 to 341 (LQQHSARLDSQQRQINENHKEMKRAAAQSAALTGLFQPYSVGK) is outer membrane translocation of the passenger domain. The next 4 beta stranded transmembrane spans lie at 342-352 (FNASAAVGGYS), 355-366 (QALAVGVGYRFN), 369-378 (TAAKAGVAFS), and 382-392 (ASWNVGVNFEF). The translocator domain stretch occupies residues 342–392 (FNASAAVGGYSDEQALAVGVGYRFNEQTAAKAGVAFSDGDASWNVGVNFEF).

The protein belongs to the autotransporter-2 (AT-2) (TC 1.B.40) family. Eib subfamily. In terms of assembly, homotrimer; can probably form mixed heterotrimers in vivo. Will form mixed heterotrimers with EibD; these are correctly located in the outer membrane and bind IgG Fc, although less well than homotrimers. Does not form trimers with distantly related YadA from Y.enterocolitica; coexpression was lethal and one of the genes is eliminated in vivo. If the full translocator domain (299-392) is exchanged with that of YadA ('368-455'), will form heterotrimers with YadA and vice-versa. In denaturing gels runs as 2 bands of about 121 and 131 kDa; extracting the sample with 88% phenol at 70 degrees Celsius reduces part of the signal to about 45 kDa. Binds the Fc portion of IgG; binds more than 1 Fc per subunit.

It is found in the cell surface. Its subcellular location is the cell outer membrane. Functionally, binds (in a non-immune fashion) to the Fc portion of human IgG but not IgA; binding occurs on the cell surface. Confers the ability to survive exposure to human serum exposure. Binds to the Fc portion of human IgG and to whole mouse antibodies also via Fc, binds more than 1 Fc or IgG. The sequence is that of Immunoglobulin-binding protein EibA from Escherichia coli.